Reading from the N-terminus, the 364-residue chain is TD and POZ domain-containing protein 2 (364 aa).

The MATH domain maps to E19–V149. In terms of domain architecture, BTB spans T188–H255.

Belongs to the Tdpoz family.

This Mus musculus (Mouse) protein is TD and POZ domain-containing protein 2.